Reading from the N-terminus, the 600-residue chain is UvrABC system protein C (600 aa).

The region spanning 15-100 (NSAGVYQYFN…IKQLHPKYNI (86 aa)) is the GIY-YIG domain. A UVR domain is found at 203–238 (SILIKNLEKQMLVLAQNENYEEAAKVRDQIVTIKDL).

It belongs to the UvrC family. Interacts with UvrB in an incision complex.

The protein localises to the cytoplasm. In terms of biological role, the UvrABC repair system catalyzes the recognition and processing of DNA lesions. UvrC both incises the 5' and 3' sides of the lesion. The N-terminal half is responsible for the 3' incision and the C-terminal half is responsible for the 5' incision. The sequence is that of UvrABC system protein C from Campylobacter jejuni subsp. jejuni serotype O:23/36 (strain 81-176).